A 251-amino-acid chain; its full sequence is Triosephosphate isomerase (251 aa).

Substrate is bound at residue 9–11 (NWK). The active-site Electrophile is histidine 95. Glutamate 167 functions as the Proton acceptor in the catalytic mechanism. Substrate-binding positions include glycine 173, serine 213, and 234–235 (GG). Phosphoserine is present on serine 213.

The protein belongs to the triosephosphate isomerase family. Homodimer.

The protein resides in the cytoplasm. The enzyme catalyses D-glyceraldehyde 3-phosphate = dihydroxyacetone phosphate. It participates in carbohydrate biosynthesis; gluconeogenesis. It functions in the pathway carbohydrate degradation; glycolysis; D-glyceraldehyde 3-phosphate from glycerone phosphate: step 1/1. In terms of biological role, involved in the gluconeogenesis. Catalyzes stereospecifically the conversion of dihydroxyacetone phosphate (DHAP) to D-glyceraldehyde-3-phosphate (G3P). This is Triosephosphate isomerase from Bacillus cereus (strain G9842).